Reading from the N-terminus, the 640-residue chain is Antigenic protein NP1 (640 aa).

The region spanning 1–288 is the Peptidase M60 domain; it reads VQVSIGKCNH…SYVNIAHAFG (288 aa). Residues 463–615 enclose the PA14 domain; the sequence is LDPHQVEYEV…TDQSSVNVSK (153 aa).

The chain is Antigenic protein NP1 from Entamoeba histolytica.